A 1495-amino-acid polypeptide reads, in one-letter code: Chromosome partition protein MukB (1495 aa).

Residue 60 to 67 (GGNGAGKS) participates in ATP binding. Coiled coils occupy residues 322–693 (RART…SQPD), 861–1140 (EDVM…AKVS), and 1233–1289 (IDAI…LQNI). The tract at residues 692-809 (PDGSEDARLN…EIPLFGRAAR (118 aa)) is flexible hinge.

This sequence belongs to the SMC family. MukB subfamily. As to quaternary structure, homodimerization via its hinge domain. Binds to DNA via its C-terminal region. Interacts, and probably forms a ternary complex, with MukE and MukF via its C-terminal region. The complex formation is stimulated by calcium or magnesium. Interacts with tubulin-related protein FtsZ.

The protein resides in the cytoplasm. Its subcellular location is the nucleoid. Functionally, plays a central role in chromosome condensation, segregation and cell cycle progression. Functions as a homodimer, which is essential for chromosome partition. Involved in negative DNA supercoiling in vivo, and by this means organize and compact chromosomes. May achieve or facilitate chromosome segregation by condensation DNA from both sides of a centrally located replisome during cell division. In Pasteurella multocida (strain Pm70), this protein is Chromosome partition protein MukB.